The primary structure comprises 301 residues: Phospholipase A1 VesT1.02 (301 aa).

6 disulfides stabilise this stretch: Cys87/Cys294, Cys176/Cys245, Cys181/Cys262, Cys219/Cys228, Cys240/Cys246, and Cys267/Cys269. Ser137 acts as the Nucleophile in catalysis. The Charge relay system role is filled by Asp165. Residue His230 is the Charge relay system of the active site.

The protein belongs to the AB hydrolase superfamily. Lipase family. Post-translationally, is not glycosylated. As to expression, expressed by the venom gland.

It is found in the secreted. It carries out the reaction a 1,2-diacyl-sn-glycero-3-phosphocholine + H2O = a 2-acyl-sn-glycero-3-phosphocholine + a fatty acid + H(+). In terms of biological role, catalyzes the hydrolysis of phosphatidylcholine with phospholipase A1 activity. Shows hemolytic activity. The chain is Phospholipase A1 VesT1.02 from Vespa tropica (Greater banded hornet).